The primary structure comprises 208 residues: Protein-L-isoaspartate O-methyltransferase (208 aa).

Ser-59 is an active-site residue.

Belongs to the methyltransferase superfamily. L-isoaspartyl/D-aspartyl protein methyltransferase family.

The protein resides in the cytoplasm. It carries out the reaction [protein]-L-isoaspartate + S-adenosyl-L-methionine = [protein]-L-isoaspartate alpha-methyl ester + S-adenosyl-L-homocysteine. Catalyzes the methyl esterification of L-isoaspartyl residues in peptides and proteins that result from spontaneous decomposition of normal L-aspartyl and L-asparaginyl residues. It plays a role in the repair and/or degradation of damaged proteins. The chain is Protein-L-isoaspartate O-methyltransferase from Serratia proteamaculans (strain 568).